The primary structure comprises 471 residues: Meiosis-specific with OB domain-containing protein (471 aa).

Positions 167–272 (IINVLAAVKS…EANILLNFIR (106 aa)) form a DNA-binding region, OB.

The protein belongs to the MEIOB family. Component of a multiprotein complex with RPA2 and SPATA22. Interacts with SPATA22. Interacts with the complex BRME1:HSF2BP:BRCA2.

Its subcellular location is the cytoplasm. It localises to the nucleus. The protein resides in the chromosome. Single-stranded DNA-binding protein required for homologous recombination in meiosis I. Required for double strand breaks (DSBs) repair and crossover formation and promotion of faithful and complete synapsis. Not required for the initial loading of recombinases but required to maintain a proper number of RAD51 and DMC1 foci after the zygotene stage. May act by ensuring the stabilization of recombinases, which is required for successful homology search and meiotic recombination. Displays Single-stranded DNA 3'-5' exonuclease activity in vitro. The sequence is that of Meiosis-specific with OB domain-containing protein (MEIOB) from Macaca fascicularis (Crab-eating macaque).